Reading from the N-terminus, the 335-residue chain is Cell division protein ZipA (335 aa).

Over 1–4 the chain is Periplasmic; it reads MDLN. The chain crosses the membrane as a helical span at residues 5–25; it reads AILIILGVIALIILVAHGIWS. Residues 26–335 lie on the Cytoplasmic side of the membrane; sequence NRCEKSQYFE…AERDYLARVS (310 aa).

This sequence belongs to the ZipA family. In terms of assembly, interacts with FtsZ via their C-terminal domains.

It localises to the cell inner membrane. Essential cell division protein that stabilizes the FtsZ protofilaments by cross-linking them and that serves as a cytoplasmic membrane anchor for the Z ring. Also required for the recruitment to the septal ring of downstream cell division proteins. This chain is Cell division protein ZipA, found in Histophilus somni (strain 129Pt) (Haemophilus somnus).